The sequence spans 761 residues: MEHQDSSPPRFRNSGSNRVTVYNGTTLPTMPKSATPTSSSTTVTTHLQNIKEEETNDDELTQVDRSSPRVLGRISSTSSSSSNIDLRDNLDMLHEIEKSNTNISLSAPNLHEELGVLSDKGNSKEELALLPPLPHTGEMEITPQFDINEAIFERDDISHSSRLEPDDVLTKLANSTRDATGEDQGFVVMTHGHDASTNDDSQLSATILDNQTSFDLSKALEMTSHSNISNIINSSGSEGRRSRTPVSNSTLKPNLSSPESAEREANTTSSSSTSDHGATMQYDPKKIITPIPVLPSSVREQQQNNAPLRERSRSNSSALASTLRDTIISGLPQNINSVERKLSRKSNRSRKNTVTFEDRLQKLPPLSTQISNQYAKVAPAENNIALHFHNLPTPVSNTQTPVTFQSESGLTGGEKKMPFLRRASSALLRKTSAKNCSNLTRTNTPTLSTSSTFESDLNARQPMLIRRSSTIDNKLPRRQLSCSKLYSRLNSDSKFANSSRASEEVLVSTPNDTEHVYRKTSLGSKIKRGFTRILSDSNNSKEILTLSPKSMVTTGPTELSFSSLSTVGGHPTTPVSKENDRVSIDGVSTFNRASTSLPESSTDDISPLREEGKINVPKRTSSRKILSKNSSKKNVLPEQQTKPSEIYLDKEALQSFVPVLSVTEGTHRINRSSLQTQSTIGLCITNLRNKEGMKLNAKEYVEILAQQQRKEDERYAVLERKFASCRWCSDKDLQYLKKKRISMNKIWSDYVRFYRGKLNNP.

M1 bears the N-acetylmethionine mark. 3 disordered regions span residues 1–82, 229–320, and 590–640; these read MEHQ…SSSS, SNII…SALA, and FNRA…PEQQ. The span at 13-27 shows a compositional bias: polar residues; sequence NSGSNRVTVYNGTTL. Over residues 28 to 45 the composition is skewed to low complexity; the sequence is PTMPKSATPTSSSTTVTT. Composition is skewed to polar residues over residues 244-259, 266-276, 590-604, and 627-640; these read TPVS…SSPE, NTTSSSSTSDH, FNRA…STDD, and SKNS…PEQQ.

Phosphorylated by CDC28.

This is an uncharacterized protein from Saccharomyces cerevisiae (strain ATCC 204508 / S288c) (Baker's yeast).